Here is a 418-residue protein sequence, read N- to C-terminus: Glutamyl-tRNA reductase (418 aa).

Residues 49–52, Ser109, 114–116, and Gln120 each bind substrate; these read TCNR and EPQ. Cys50 functions as the Nucleophile in the catalytic mechanism. 189-194 provides a ligand contact to NADP(+); it reads GAGETI.

The protein belongs to the glutamyl-tRNA reductase family. Homodimer.

The catalysed reaction is (S)-4-amino-5-oxopentanoate + tRNA(Glu) + NADP(+) = L-glutamyl-tRNA(Glu) + NADPH + H(+). The protein operates within porphyrin-containing compound metabolism; protoporphyrin-IX biosynthesis; 5-aminolevulinate from L-glutamyl-tRNA(Glu): step 1/2. In terms of biological role, catalyzes the NADPH-dependent reduction of glutamyl-tRNA(Glu) to glutamate 1-semialdehyde (GSA). This is Glutamyl-tRNA reductase from Shigella flexneri.